A 266-amino-acid chain; its full sequence is Putative carbamate hydrolase RutD (266 aa).

It belongs to the AB hydrolase superfamily. Hydrolase RutD family.

The catalysed reaction is carbamate + 2 H(+) = NH4(+) + CO2. Involved in pyrimidine catabolism. May facilitate the hydrolysis of carbamate, a reaction that can also occur spontaneously. This is Putative carbamate hydrolase RutD from Enterobacter cloacae subsp. cloacae (strain ATCC 13047 / DSM 30054 / NBRC 13535 / NCTC 10005 / WDCM 00083 / NCDC 279-56).